A 71-amino-acid polypeptide reads, in one-letter code: DNA-directed RNA polymerase subunit omega (71 aa).

It belongs to the RNA polymerase subunit omega family. As to quaternary structure, the RNAP catalytic core consists of 2 alpha, 1 beta, 1 beta' and 1 omega subunit. When a sigma factor is associated with the core the holoenzyme is formed, which can initiate transcription.

It catalyses the reaction RNA(n) + a ribonucleoside 5'-triphosphate = RNA(n+1) + diphosphate. Functionally, promotes RNA polymerase assembly. Latches the N- and C-terminal regions of the beta' subunit thereby facilitating its interaction with the beta and alpha subunits. The polypeptide is DNA-directed RNA polymerase subunit omega (Levilactobacillus brevis (strain ATCC 367 / BCRC 12310 / CIP 105137 / JCM 1170 / LMG 11437 / NCIMB 947 / NCTC 947) (Lactobacillus brevis)).